A 319-amino-acid chain; its full sequence is Ferrochelatase (319 aa).

His193 and Glu274 together coordinate Fe cation.

The protein belongs to the ferrochelatase family.

It localises to the cytoplasm. The catalysed reaction is heme b + 2 H(+) = protoporphyrin IX + Fe(2+). The protein operates within porphyrin-containing compound metabolism; protoheme biosynthesis; protoheme from protoporphyrin-IX: step 1/1. Its function is as follows. Catalyzes the ferrous insertion into protoporphyrin IX. The chain is Ferrochelatase from Actinobacillus pleuropneumoniae serotype 7 (strain AP76).